Consider the following 208-residue polypeptide: Small ribosomal subunit protein uS4A (208 aa).

Residues 98–159 (SRLDNVAYNM…HAKSYLRIKA (62 aa)) form the S4 RNA-binding domain.

The protein belongs to the universal ribosomal protein uS4 family. Part of the 30S ribosomal subunit. Contacts protein S5. The interaction surface between S4 and S5 is involved in control of translational fidelity.

Functionally, one of the primary rRNA binding proteins, it binds directly to 16S rRNA where it nucleates assembly of the body of the 30S subunit. Its function is as follows. With S5 and S12 plays an important role in translational accuracy. The protein is Small ribosomal subunit protein uS4A (rpsD1) of Nitrosomonas europaea (strain ATCC 19718 / CIP 103999 / KCTC 2705 / NBRC 14298).